Here is a 327-residue protein sequence, read N- to C-terminus: tRNA(Ile)-lysidine synthase (327 aa).

Residue Ser-32–Ser-37 participates in ATP binding.

Belongs to the tRNA(Ile)-lysidine synthase family.

It localises to the cytoplasm. The catalysed reaction is cytidine(34) in tRNA(Ile2) + L-lysine + ATP = lysidine(34) in tRNA(Ile2) + AMP + diphosphate + H(+). In terms of biological role, ligates lysine onto the cytidine present at position 34 of the AUA codon-specific tRNA(Ile) that contains the anticodon CAU, in an ATP-dependent manner. Cytidine is converted to lysidine, thus changing the amino acid specificity of the tRNA from methionine to isoleucine. This Synechococcus sp. (strain JA-2-3B'a(2-13)) (Cyanobacteria bacterium Yellowstone B-Prime) protein is tRNA(Ile)-lysidine synthase.